The following is a 241-amino-acid chain: Probable transcriptional regulator PhnF (241 aa).

Positions 11–78 (PTRYQEIAAK…QGVGVLVLMR (68 aa)) constitute an HTH gntR-type domain. Positions 38 to 57 (EQQLAARFEVNRHTLRRAID) form a DNA-binding region, H-T-H motif.

Belongs to an operon involved in alkylphosphonate uptake and C-P lyase. Exact function not known. By similarity could be a transcriptional regulator. This Escherichia coli (strain K12) protein is Probable transcriptional regulator PhnF (phnF).